Consider the following 378-residue polypeptide: Transmembrane protein adipocyte-associated 1 homolog (378 aa).

Residues Asn-16, Asn-25, and Asn-36 are each glycosylated (N-linked (GlcNAc...) asparagine). Helical transmembrane passes span 61 to 81, 88 to 108, 136 to 156, 164 to 184, 205 to 225, 247 to 267, and 278 to 298; these read VMLL…LPSA, TSSP…AVGI, FFLL…GHLE, VLAI…TLEI, HFWL…VILP, ILAL…ADII, and FLYF…GFFG. A disordered region spans residues 316-335; that stretch reads DSDVHLPHTSSSGLGRKDLD.

This sequence belongs to the UPF0359 family.

It localises to the membrane. In Danio rerio (Zebrafish), this protein is Transmembrane protein adipocyte-associated 1 homolog (tpra1).